The chain runs to 261 residues: Imidazole glycerol phosphate synthase subunit HisF (261 aa).

Active-site residues include D11 and D130.

This sequence belongs to the HisA/HisF family. Heterodimer of HisH and HisF.

The protein localises to the cytoplasm. It catalyses the reaction 5-[(5-phospho-1-deoxy-D-ribulos-1-ylimino)methylamino]-1-(5-phospho-beta-D-ribosyl)imidazole-4-carboxamide + L-glutamine = D-erythro-1-(imidazol-4-yl)glycerol 3-phosphate + 5-amino-1-(5-phospho-beta-D-ribosyl)imidazole-4-carboxamide + L-glutamate + H(+). It participates in amino-acid biosynthesis; L-histidine biosynthesis; L-histidine from 5-phospho-alpha-D-ribose 1-diphosphate: step 5/9. IGPS catalyzes the conversion of PRFAR and glutamine to IGP, AICAR and glutamate. The HisF subunit catalyzes the cyclization activity that produces IGP and AICAR from PRFAR using the ammonia provided by the HisH subunit. This chain is Imidazole glycerol phosphate synthase subunit HisF, found in Limosilactobacillus fermentum (strain NBRC 3956 / LMG 18251) (Lactobacillus fermentum).